The primary structure comprises 306 residues: Serine/threonine-protein phosphatase 2A catalytic subunit A (306 aa).

Residues D54, H56, D82, and N114 each contribute to the Mn(2+) site. Catalysis depends on H115, which acts as the Proton donor. Mn(2+) is bound by residues H164 and H238. The residue at position 306 (L306) is a Leucine methyl ester.

It belongs to the PPP phosphatase family. PP-2A subfamily. PP2A consists of a trimeric holoenzyme, composed of a 37 kDa catalytic subunit (C subunit) and a 65 kDa constant regulatory subunit (A subunit), that associates with a variety of regulatory subunits (B subunit) such as phr2AB (B55) and psrA (B56 homolog). The trimer may partially dissociates into a core 'AC' dimer equally active compared to the trimer. Mn(2+) is required as a cofactor. Post-translationally, reversibly methyl esterified on Leu-306 by leucine carboxyl methyltransferase 1 (LCMT) and protein phosphatase methylesterase 1 (PPME1). Carboxyl methylation influences the affinity of the catalytic subunit for the different regulatory subunits, thereby modulating the PP2A holoenzyme's substrate specificity, enzyme activity and cellular localization.

It is found in the cytoplasm. Its subcellular location is the cytosol. The protein resides in the nucleus speckle. The enzyme catalyses O-phospho-L-seryl-[protein] + H2O = L-seryl-[protein] + phosphate. It catalyses the reaction O-phospho-L-threonyl-[protein] + H2O = L-threonyl-[protein] + phosphate. Its function is as follows. Plays a role in activating the myosin contractile function. Dephosphorylates threonine at 'Thr-1823', 'Thr-1833' and 'Thr-2029' in the C-terminal tail region of myosin II heavy chain (mhcA). Drives the assembly of dephosphorylated myosin II filaments to allow myosin recruitment into the cytoskeleton. In Dictyostelium discoideum (Social amoeba), this protein is Serine/threonine-protein phosphatase 2A catalytic subunit A (pho2a).